A 131-amino-acid chain; its full sequence is Encapsulated ferritin-like protein (131 aa).

Positions 30, 60, and 63 each coordinate Fe cation. The segment at 96–131 is disordered; that stretch reads EEEDTGSSSSVAASPTSAPSHGSLGIGSLRQEGKED. A targeting peptide region spans residues 98–131; the sequence is EDTGSSSSVAASPTSAPSHGSLGIGSLRQEGKED. The segment covering 102-115 has biased composition (low complexity); that stretch reads SSSSVAASPTSAPS.

This sequence belongs to the ferritin-like superfamily. EncFtn family. In terms of assembly, forms dimers at all pH tested; under acidic conditions formes decamers. The N-terminal domain (residues 1-97) crystallizes as a decameric ring. Four decamers are loaded in the encapsulin nanocompartment in a tetrahedral arrangement. A 3 nm gap is consistently seen between the shell and the cargo. The target peptide extends away from the decameric ring, to allow binding to the interior of the encapsulin nanocompartment shell.

The protein localises to the encapsulin nanocompartment. It catalyses the reaction 4 Fe(2+) + O2 + 4 H(+) = 4 Fe(3+) + 2 H2O. The ferroxidase activity is inhibited by zinc. Cargo protein of a type 1 encapsulin nanocompartment. A ferritin-like ferroxidase that converts Fe(2+) to Fe(3+) iron inside the encapsulin nanocompartment. Mineralized Fe(3+) is released to the exterior of the decameric complex for deposition in the encapsulin nanocompartment. In solution the decamer binds 10-15 iron cations; in the encapsulin nanocompartment the decamer can bind up to 48 ions, perhaps via its internal channel, and on its exterior. The cargo-loaded nanocompartment maximally sequesters up to 4150 Fe ions. In Haliangium ochraceum (strain DSM 14365 / JCM 11303 / SMP-2), this protein is Encapsulated ferritin-like protein.